The sequence spans 198 residues: Na(+)-translocating NADH-quinone reductase subunit E (198 aa).

A run of 6 helical transmembrane segments spans residues 11 to 31 (AVFIENMALAFFLGMCTFLAV), 39 to 59 (FGLGIAVTVVLGLSVPLNNLV), 77 to 97 (FLNFITFIGVIAALVQILEMI), 109 to 129 (LGIFLPLITVNCAIFGGVSFM), 140 to 160 (IVYGFGSGIGWMLAIVLLASI), and 176 to 196 (LGVTFVTTGLMALGFMSFSGV).

It belongs to the NqrDE/RnfAE family. In terms of assembly, composed of six subunits; NqrA, NqrB, NqrC, NqrD, NqrE and NqrF.

The protein resides in the cell inner membrane. It carries out the reaction a ubiquinone + n Na(+)(in) + NADH + H(+) = a ubiquinol + n Na(+)(out) + NAD(+). In terms of biological role, NQR complex catalyzes the reduction of ubiquinone-1 to ubiquinol by two successive reactions, coupled with the transport of Na(+) ions from the cytoplasm to the periplasm. NqrA to NqrE are probably involved in the second step, the conversion of ubisemiquinone to ubiquinol. In Proteus mirabilis (strain HI4320), this protein is Na(+)-translocating NADH-quinone reductase subunit E.